Consider the following 110-residue polypeptide: PCNA-associated factor (110 aa).

Residue Lys-15 forms a Glycyl lysine isopeptide (Lys-Gly) (interchain with G-Cter in ubiquitin) linkage. The D-box motif lies at 23 to 34 (RKVLGSSTFVTN). Lys-24 is subject to N6-acetyllysine; alternate. Lys-24 participates in a covalent cross-link: Glycyl lysine isopeptide (Lys-Gly) (interchain with G-Cter in ubiquitin); alternate. Phosphoserine is present on residues Ser-28 and Ser-71. Residues 28-39 (SSTFVTNSSSSS) are compositionally biased toward low complexity. Residues 28–110 (SSTFVTNSSS…QPDHRDDENE (83 aa)) are disordered. The short motif at 61 to 71 (QKGIGEFFRLS) is the PIP-box element. Positions 71–80 (SPKESKKENQ) are enriched in basic and acidic residues. The KEN box signature appears at 77–79 (KEN). The Initiation motif motif lies at 84 to 96 (EAGTSGLGKAKRK).

In terms of assembly, interacts (when monoubiquitinated at Lys-15 and Lys-24) with PCNA. Interacts with isoform 2/p33ING1b of ING1. Interacts with BRCA1. Post-translationally, monoubiquitinated at Lys-15 and Lys-24 during normal S phase, promoting its association with PCNA. Also diubiquitinated at these 2 sites. Following DNA damage, monoubiquitin chains at Lys-15 and Lys-24 are probably extended, leading to disrupt the interaction with PCNA. Polyubiquitinated by the APC/C complex at the mitotic exit, leading to its degradation by the proteasome.

Its subcellular location is the nucleus. It is found in the cytoplasm. The protein localises to the perinuclear region. Its function is as follows. PCNA-binding protein that acts as a regulator of DNA repair during DNA replication. Following DNA damage, the interaction with PCNA is disrupted, facilitating the interaction between monoubiquitinated PCNA and the translesion DNA synthesis DNA polymerase eta (POLH) at stalled replisomes, facilitating the bypass of replication-fork-blocking lesions. Also acts as a regulator of centrosome number. The chain is PCNA-associated factor from Mus musculus (Mouse).